Reading from the N-terminus, the 339-residue chain is MSSKFDIGSLSIVMTLLICFLLLSLAPKLEAELATVQHAPNPDGSISFLVIGDWGRHGLYNQSQVALQMGRIGEEMDINFVVSTGDNIYDNGMKSIDDPAFQLSFSNIYTSPSLQKPWYLVLGNHDYRGDVEAQLSPILRSMDSRWICMRSFIVDAEIAELFFVDTTPFVDAYFLSPQDQTYDWSGVSPRKSYLQTILTELEMGLRESSAKWKIVVGHHAIKSASIHGNTKELESLLLPILEANKVDLYMNGHDHCLQHISTSQSPIQFLTSGGGSKAWRGYYNWTTPEDMKFFYDGQGFMSVKITRSELSVVFYDVSGNSLHKWDTSKMLDSDFYFPL.

An N-terminal signal peptide occupies residues 1 to 31 (MSSKFDIGSLSIVMTLLICFLLLSLAPKLEA). Residue Asp53 participates in Fe cation binding. Residue Asn61 is glycosylated (N-linked (GlcNAc...) asparagine). Asp86 and Tyr89 together coordinate Fe cation. Zn(2+) is bound at residue Asp86. Residues Asn124 and His218 each contribute to the Zn(2+) site. His227 acts as the Proton donor in catalysis. A Zn(2+)-binding site is contributed by His253. 253 to 255 (HDH) contributes to the substrate binding site. His255 serves as a coordination point for Fe cation. A glycan (N-linked (GlcNAc...) asparagine) is linked at Asn284.

It belongs to the metallophosphoesterase superfamily. Purple acid phosphatase family. In terms of assembly, homodimer. The cofactor is Fe cation. Zn(2+) is required as a cofactor. As to expression, expressed in roots, stems, leaves, flowers and siliques.

It is found in the secreted. The catalysed reaction is a phosphate monoester + H2O = an alcohol + phosphate. The chain is Purple acid phosphatase 4 (PAP4) from Arabidopsis thaliana (Mouse-ear cress).